The sequence spans 300 residues: Probable protein phosphatase 2C 3 (300 aa).

A PPM-type phosphatase domain is found at 23-298 (IFAASEMQGW…DNMTTILVYL (276 aa)). The Mn(2+) site is built by Asp57, Gly58, Asp237, and Asp289.

Belongs to the PP2C family. Requires Mg(2+) as cofactor. The cofactor is Mn(2+).

The protein resides in the membrane. The catalysed reaction is O-phospho-L-seryl-[protein] + H2O = L-seryl-[protein] + phosphate. It carries out the reaction O-phospho-L-threonyl-[protein] + H2O = L-threonyl-[protein] + phosphate. Functionally, enzyme with a broad specificity. This chain is Probable protein phosphatase 2C 3, found in Paramecium tetraurelia.